The following is a 232-amino-acid chain: Cobalt transport protein CbiM (232 aa).

The next 6 helical transmembrane spans lie at 6–26 (GFLPPAHAIAWGVASAPFVVH), 43–63 (LLLGASGAFTFVLSALKLPSV), 84–104 (IMAVLGTITLLFQALLLAHGG), 107–127 (TLGANVFSMAIVGPWAGYGVY), 135–155 (VPLMVTVFFGAFVADLSTYCV), and 181–201 (IFAVTQIPLAVSEGLLTVIVM).

Belongs to the CbiM family. Forms an energy-coupling factor (ECF) transporter complex composed of an ATP-binding protein (A component, CbiO), a transmembrane protein (T component, CbiQ) and 2 possible substrate-capture proteins (S components, CbiM and CbiN) of unknown stoichimetry.

The protein localises to the cell membrane. It participates in cofactor biosynthesis; adenosylcobalamin biosynthesis. Its function is as follows. Part of the energy-coupling factor (ECF) transporter complex CbiMNOQ involved in cobalt import. The chain is Cobalt transport protein CbiM from Streptomyces coelicolor (strain ATCC BAA-471 / A3(2) / M145).